A 456-amino-acid polypeptide reads, in one-letter code: Argininosuccinate lyase (456 aa).

Belongs to the lyase 1 family. Argininosuccinate lyase subfamily.

The protein localises to the cytoplasm. It catalyses the reaction 2-(N(omega)-L-arginino)succinate = fumarate + L-arginine. It functions in the pathway amino-acid biosynthesis; L-arginine biosynthesis; L-arginine from L-ornithine and carbamoyl phosphate: step 3/3. The sequence is that of Argininosuccinate lyase from Listeria innocua serovar 6a (strain ATCC BAA-680 / CLIP 11262).